Consider the following 470-residue polypeptide: ATP synthase subunit beta (470 aa).

An ATP-binding site is contributed by 148–155 (GGAGVGKT).

It belongs to the ATPase alpha/beta chains family. In terms of assembly, F-type ATPases have 2 components, CF(1) - the catalytic core - and CF(0) - the membrane proton channel. CF(1) has five subunits: alpha(3), beta(3), gamma(1), delta(1), epsilon(1). CF(0) has three main subunits: a(1), b(2) and c(9-12). The alpha and beta chains form an alternating ring which encloses part of the gamma chain. CF(1) is attached to CF(0) by a central stalk formed by the gamma and epsilon chains, while a peripheral stalk is formed by the delta and b chains.

It localises to the cell inner membrane. It carries out the reaction ATP + H2O + 4 H(+)(in) = ADP + phosphate + 5 H(+)(out). Functionally, produces ATP from ADP in the presence of a proton gradient across the membrane. The catalytic sites are hosted primarily by the beta subunits. This is ATP synthase subunit beta from Teredinibacter turnerae (strain ATCC 39867 / T7901).